The primary structure comprises 439 residues: Rho GTPase-activating protein 1 (439 aa).

Position 1 is an N-acetylmethionine (Met-1). The segment covering 28-48 has biased composition (basic and acidic residues); the sequence is IDEKNWPSDEMPDFPKSDDSK. The interval 28–52 is disordered; the sequence is IDEKNWPSDEMPDFPKSDDSKSSSP. Ser-44, Ser-47, Ser-50, and Ser-51 each carry phosphoserine. The CRAL-TRIO domain maps to 63 to 218; that stretch reads PYYDIARHQI…QVLKYDDFLK (156 aa). Position 65 is a phosphotyrosine (Tyr-65). At Lys-80 the chain carries N6-acetyllysine. The SH3-binding motif lies at 228 to 238; sequence PKPMPPRPPLP. The region spanning 244 to 431 is the Rho-GAP domain; that stretch reads VSLQHLQEKN…FLLDHQGELF (188 aa).

In terms of assembly, found in a complex with XPO7, EIF4A1, ARHGAP1, VPS26A, VPS29, VPS35 and SFN. Interacts with BNIPL. As to expression, ubiquitous.

The protein resides in the cytoplasm. In terms of biological role, GTPase activator for the Rho, Rac and Cdc42 proteins, converting them to the putatively inactive GDP-bound state. Cdc42 seems to be the preferred substrate. The polypeptide is Rho GTPase-activating protein 1 (ARHGAP1) (Homo sapiens (Human)).